Consider the following 160-residue polypeptide: MLTIKRYPGAIEFTVHTSKSYGTQMFALCFISFVIGATSLAIGRSPKIIITLVELSFLLSLFHIISGVNHESLFVIRDLGVQTNCHSIVPWKSSSKLIPLDSIRDIFINEGFRKFDVCYYMGIAIESETEIHVVFPTLLPRHDVLQKVYKETVILLANNS.

A run of 2 helical transmembrane segments spans residues 22 to 42 (GTQM…SLAI) and 48 to 68 (IIIT…ISGV).

Belongs to the PIGH family.

The protein resides in the endoplasmic reticulum membrane. The enzyme catalyses a 1,2-diacyl-sn-glycero-3-phospho-(1D-myo-inositol) + UDP-N-acetyl-alpha-D-glucosamine = a 6-(N-acetyl-alpha-D-glucosaminyl)-1-(1,2-diacyl-sn-glycero-3-phospho)-1D-myo-inositol + UDP + H(+). It participates in glycolipid biosynthesis; glycosylphosphatidylinositol-anchor biosynthesis. Part of the complex catalyzing the transfer of N-acetylglucosamine from UDP-N-acetylglucosamine to phosphatidylinositol, the first step of GPI biosynthesis. This Schizosaccharomyces pombe (strain 972 / ATCC 24843) (Fission yeast) protein is Phosphatidylinositol N-acetylglucosaminyltransferase subunit gpi15 (gpi15).